We begin with the raw amino-acid sequence, 297 residues long: Phosphatidylserine decarboxylase proenzyme (297 aa).

Active-site charge relay system; for autoendoproteolytic cleavage activity residues include aspartate 100, histidine 157, and serine 263. Serine 263 serves as the catalytic Schiff-base intermediate with substrate; via pyruvic acid; for decarboxylase activity. Pyruvic acid (Ser); by autocatalysis is present on serine 263.

The protein belongs to the phosphatidylserine decarboxylase family. PSD-B subfamily. Prokaryotic type I sub-subfamily. In terms of assembly, heterodimer of a large membrane-associated beta subunit and a small pyruvoyl-containing alpha subunit. The cofactor is pyruvate. Is synthesized initially as an inactive proenzyme. Formation of the active enzyme involves a self-maturation process in which the active site pyruvoyl group is generated from an internal serine residue via an autocatalytic post-translational modification. Two non-identical subunits are generated from the proenzyme in this reaction, and the pyruvate is formed at the N-terminus of the alpha chain, which is derived from the carboxyl end of the proenzyme. The autoendoproteolytic cleavage occurs by a canonical serine protease mechanism, in which the side chain hydroxyl group of the serine supplies its oxygen atom to form the C-terminus of the beta chain, while the remainder of the serine residue undergoes an oxidative deamination to produce ammonia and the pyruvoyl prosthetic group on the alpha chain. During this reaction, the Ser that is part of the protease active site of the proenzyme becomes the pyruvoyl prosthetic group, which constitutes an essential element of the active site of the mature decarboxylase.

It localises to the cell membrane. The catalysed reaction is a 1,2-diacyl-sn-glycero-3-phospho-L-serine + H(+) = a 1,2-diacyl-sn-glycero-3-phosphoethanolamine + CO2. Its pathway is phospholipid metabolism; phosphatidylethanolamine biosynthesis; phosphatidylethanolamine from CDP-diacylglycerol: step 2/2. In terms of biological role, catalyzes the formation of phosphatidylethanolamine (PtdEtn) from phosphatidylserine (PtdSer). This Actinobacillus pleuropneumoniae serotype 5b (strain L20) protein is Phosphatidylserine decarboxylase proenzyme.